Consider the following 1052-residue polypeptide: Calmin (1052 aa).

The tract at residues 1–288 (MAAQEWDWFQ…IVTYVAQFLE (288 aa)) is actin-binding. In terms of domain architecture, Calponin-homology (CH) 1 spans 32-139 (NVQKRTFTRW…LIWNIILFFQ (108 aa)). Low complexity predominate over residues 148 to 168 (SRSSPSSSLSPGSGGTDSDSS). Positions 148-178 (SRSSPSSSLSPGSGGTDSDSSYPPTPTTERS) are disordered. In terms of domain architecture, Calponin-homology (CH) 2 spans 187 to 291 (RKAIKTLLSW…YVAQFLERFP (105 aa)). Disordered regions lie at residues 391–420 (STGK…SNSL), 455–545 (KATK…TLLA), 585–727 (STSQ…SPPL), and 758–929 (GEDL…DSSI). 2 stretches are compositionally biased toward basic and acidic residues: residues 455-465 (KATKELSKQDG) and 472-495 (VSKE…DKVP). The span at 509-529 (AQPSQDSSFCNGTVESPSSQG) shows a compositional bias: polar residues. A Phosphoserine modification is found at Ser537. 3 stretches are compositionally biased toward basic and acidic residues: residues 594–614 (PSSH…AEKP), 622–651 (PRAE…EDQG), and 659–669 (PADKKPKVYEK). Ser679 is modified (phosphoserine). A Phosphothreonine modification is found at Thr710. Positions 711–720 (LRSHSEEGLD) are enriched in basic and acidic residues. Residue Ser724 is modified to Phosphoserine. Positions 759-773 (EDLKSEDTDLEHPED) are enriched in basic and acidic residues. Residues 780 to 791 (REEEADEDEEEA) are compositionally biased toward acidic residues. Low complexity predominate over residues 792 to 801 (QSSQSSCSFS). Over residues 836–849 (SHEDHQPKETKENG) the composition is skewed to basic and acidic residues. Ser856 is subject to Phosphoserine. Residues 880 to 889 (SKKKEKRKHM) show a composition bias toward basic residues. The residue at position 925 (Ser925) is a Phosphoserine. Residues 1027-1047 (VIYFILFLWLLVYCLLLFPQL) form a helical; Anchor for type IV membrane protein membrane-spanning segment.

In terms of tissue distribution, expressed in testis. Expressed during testis maturation process and in maturing spermatids. In brain, it is expressed in neurons of the hippocampus, cerebral cortex, and thalamus, Purkinje cells, and also in the choroid plexus and ependymal cells. Expressed predominantly in dendrites and cell bodies of the neurons, but not in axons. The level of expression increases during the period of maturation of the mouse brain after birth.

Its subcellular location is the membrane. The protein localises to the cytoplasm. The sequence is that of Calmin (Clmn) from Mus musculus (Mouse).